Consider the following 421-residue polypeptide: Histidine--tRNA ligase (421 aa).

Belongs to the class-II aminoacyl-tRNA synthetase family. Homodimer.

The protein localises to the cytoplasm. The catalysed reaction is tRNA(His) + L-histidine + ATP = L-histidyl-tRNA(His) + AMP + diphosphate + H(+). The sequence is that of Histidine--tRNA ligase from Francisella tularensis subsp. holarctica (strain FTNF002-00 / FTA).